Here is a 431-residue protein sequence, read N- to C-terminus: Pachytene checkpoint protein 2 homolog (431 aa).

M1 is modified (N-acetylmethionine). 179 to 186 (GPPGTGKT) contacts ATP.

Belongs to the AAA ATPase family. PCH2 subfamily. As to quaternary structure, specifically interacts with the ligand binding domain of the thyroid receptor (TR). This interaction does not require the presence of thyroid hormone for its interaction. Interacts with proteasome subunit PSMA8; to participate in meiosis progression during spermatogenesis.

Functionally, plays a key role in chromosome recombination and chromosome structure development during meiosis. Required at early steps in meiotic recombination that leads to non-crossovers pathways. Also needed for efficient completion of homologous synapsis by influencing crossover distribution along the chromosomes affecting both crossovers and non-crossovers pathways. Also required for development of higher-order chromosome structures and is needed for synaptonemal-complex formation. In males, required for efficient synapsis of the sex chromosomes and for sex body formation. Promotes early steps of the DNA double-strand breaks (DSBs) repair process upstream of the assembly of RAD51 complexes. Required for depletion of HORMAD1 and HORMAD2 from synapsed chromosomes. Plays a role in mitotic spindle assembly checkpoint (SAC) activation. The sequence is that of Pachytene checkpoint protein 2 homolog (TRIP13) from Sus scrofa (Pig).